Reading from the N-terminus, the 180-residue chain is Peptidyl-tRNA hydrolase (180 aa).

TRNA is bound at residue Tyr13. The active-site Proton acceptor is His18. Tyr58, Asn60, and Asn100 together coordinate tRNA.

This sequence belongs to the PTH family. In terms of assembly, monomer.

It is found in the cytoplasm. The catalysed reaction is an N-acyl-L-alpha-aminoacyl-tRNA + H2O = an N-acyl-L-amino acid + a tRNA + H(+). Its function is as follows. Hydrolyzes ribosome-free peptidyl-tRNAs (with 1 or more amino acids incorporated), which drop off the ribosome during protein synthesis, or as a result of ribosome stalling. In terms of biological role, catalyzes the release of premature peptidyl moieties from peptidyl-tRNA molecules trapped in stalled 50S ribosomal subunits, and thus maintains levels of free tRNAs and 50S ribosomes. This is Peptidyl-tRNA hydrolase from Fervidobacterium nodosum (strain ATCC 35602 / DSM 5306 / Rt17-B1).